Consider the following 200-residue polypeptide: Protein GrpE (200 aa).

A disordered region spans residues 15–47 (DLEMDLNEEELEESEVNEDKEFEELDKSEEENE). Residues 16–47 (LEMDLNEEELEESEVNEDKEFEELDKSEEENE) are compositionally biased toward acidic residues.

This sequence belongs to the GrpE family. Homodimer.

The protein localises to the cytoplasm. Functionally, participates actively in the response to hyperosmotic and heat shock by preventing the aggregation of stress-denatured proteins, in association with DnaK and GrpE. It is the nucleotide exchange factor for DnaK and may function as a thermosensor. Unfolded proteins bind initially to DnaJ; upon interaction with the DnaJ-bound protein, DnaK hydrolyzes its bound ATP, resulting in the formation of a stable complex. GrpE releases ADP from DnaK; ATP binding to DnaK triggers the release of the substrate protein, thus completing the reaction cycle. Several rounds of ATP-dependent interactions between DnaJ, DnaK and GrpE are required for fully efficient folding. This chain is Protein GrpE, found in Clostridium tetani (strain Massachusetts / E88).